The chain runs to 382 residues: V-type proton ATPase subunit C 1 (382 aa).

N-acetylthreonine is present on Thr2.

It belongs to the V-ATPase C subunit family. As to quaternary structure, V-ATPase is a heteromultimeric enzyme made up of two complexes: the ATP-hydrolytic V1 complex and the proton translocation V0 complex. The V1 complex consists of three catalytic AB heterodimers that form a heterohexamer, three peripheral stalks each consisting of EG heterodimers, one central rotor including subunits D and F, and the regulatory subunits C and H. The proton translocation complex V0 consists of the proton transport subunit a, a ring of proteolipid subunits c9c'', rotary subunit d, subunits e and f, and two accessory subunits.

Functionally, subunit of the V1 complex of vacuolar(H+)-ATPase (V-ATPase), a multisubunit enzyme composed of a peripheral complex (V1) that hydrolyzes ATP and a membrane integral complex (V0) that translocates protons. V-ATPase is responsible for acidifying and maintaining the pH of intracellular compartments and in some cell types, is targeted to the plasma membrane, where it is responsible for acidifying the extracellular environment. Subunit C is necessary for the assembly of the catalytic sector of the enzyme and is likely to have a specific function in its catalytic activity. The chain is V-type proton ATPase subunit C 1 (atp6v1c1) from Xenopus laevis (African clawed frog).